Consider the following 336-residue polypeptide: MAAAVRCLRRVLIHHQRHCLCKMASQASLYPCSVNSLLHNRHFAAAAAAATKPARKIKKGAKEKTSDEKPVDDIEKIKSYTYMESDPEDDVYLKRLYPRRIYEVEKAIHLLKKFQVLDFTNPKQGVYLDLTLDMALGKKKTVEPFASVIALPHLFSSEVNKVAVFTANASEIKIAEENGAAFAGGTDLVKKIMDDEVVVDFYVAVPEIMGELNPLRKKLKKRFPKATRNSIGRDIPKMLELFKTAHEIMVDEERQNFLSTKIATLDMPSDQIAANLQAVINEVCKHRPLNLGPFVVRAFLRSSTSEGLLLKTDSLLPKEAKTTEAETEETQTAEAA.

A mitochondrion-targeting transit peptide spans 1–50; it reads MAAAVRCLRRVLIHHQRHCLCKMASQASLYPCSVNSLLHNRHFAAAAAAA. Position 85 is a phosphoserine (serine 85).

This sequence belongs to the universal ribosomal protein uL1 family.

It is found in the mitochondrion. This is Large ribosomal subunit protein uL1m (Mrpl1) from Mus musculus (Mouse).